Here is a 359-residue protein sequence, read N- to C-terminus: SAGA complex subunit Spt7 (359 aa).

Component of the Spt-Ada-Gcn5 acetyltransferase (SAGA) complex consisting of wda/Taf5L, Saf6, Taf9, Taf10b, Taf12, Ada1, Spt3, Spt7, Spt20, Sf3b3, Sf3b5, Nipped-A/Tra1, a histone acetyltransferase (HAT) module made up of Gcn5, Ada2b (Isoform B), Ada3 and Sgf29, and a deubiquitinase (DUB) module made up of not/nonstop, Sgf11 and e(y)2 tethered to SAGA by Atxn7. Interacts with Ada2b; the interaction is direct.

Its subcellular location is the nucleus. Its function is as follows. Component of the transcription regulatory complex SAGA, a multiprotein complex that activates transcription by remodeling chromatin and mediating histone acetylation and deubiquitination. The SAGA complex predominantly acetylates histone H3. The chain is SAGA complex subunit Spt7 from Drosophila melanogaster (Fruit fly).